A 310-amino-acid chain; its full sequence is Biotin synthase (310 aa).

Residues 34–262 (GRVQLCALVN…TAQIRLSAGR (229 aa)) form the Radical SAM core domain. Positions 49, 53, and 56 each coordinate [4Fe-4S] cluster. Residues C93, C125, C185, and R257 each coordinate [2Fe-2S] cluster.

Belongs to the radical SAM superfamily. Biotin synthase family. Homodimer. [4Fe-4S] cluster serves as cofactor. Requires [2Fe-2S] cluster as cofactor.

The catalysed reaction is (4R,5S)-dethiobiotin + (sulfur carrier)-SH + 2 reduced [2Fe-2S]-[ferredoxin] + 2 S-adenosyl-L-methionine = (sulfur carrier)-H + biotin + 2 5'-deoxyadenosine + 2 L-methionine + 2 oxidized [2Fe-2S]-[ferredoxin]. It participates in cofactor biosynthesis; biotin biosynthesis; biotin from 7,8-diaminononanoate: step 2/2. Its function is as follows. Catalyzes the conversion of dethiobiotin (DTB) to biotin by the insertion of a sulfur atom into dethiobiotin via a radical-based mechanism. This Synechococcus sp. (strain JA-3-3Ab) (Cyanobacteria bacterium Yellowstone A-Prime) protein is Biotin synthase.